A 94-amino-acid chain; its full sequence is DNA-directed RNA polymerase subunit Rpo11 (94 aa).

Belongs to the archaeal Rpo11/eukaryotic RPB11/RPC19 RNA polymerase subunit family. Part of the RNA polymerase complex.

It is found in the cytoplasm. The catalysed reaction is RNA(n) + a ribonucleoside 5'-triphosphate = RNA(n+1) + diphosphate. Its function is as follows. DNA-dependent RNA polymerase (RNAP) catalyzes the transcription of DNA into RNA using the four ribonucleoside triphosphates as substrates. The protein is DNA-directed RNA polymerase subunit Rpo11 of Natronomonas pharaonis (strain ATCC 35678 / DSM 2160 / CIP 103997 / JCM 8858 / NBRC 14720 / NCIMB 2260 / Gabara) (Halobacterium pharaonis).